A 418-amino-acid chain; its full sequence is Histidine--tRNA ligase (418 aa).

The protein belongs to the class-II aminoacyl-tRNA synthetase family. Homodimer.

Its subcellular location is the cytoplasm. The enzyme catalyses tRNA(His) + L-histidine + ATP = L-histidyl-tRNA(His) + AMP + diphosphate + H(+). The chain is Histidine--tRNA ligase from Thermoanaerobacter pseudethanolicus (strain ATCC 33223 / 39E) (Clostridium thermohydrosulfuricum).